A 46-amino-acid chain; its full sequence is Protein PsbN (46 aa).

The helical transmembrane segment at 10 to 30 (LIITILAVTIAFTAVSLYTAF) threads the bilayer.

It belongs to the PsbN family.

It is found in the cellular thylakoid membrane. Its function is as follows. May play a role in photosystem I and II biogenesis. This Acaryochloris marina (strain MBIC 11017) protein is Protein PsbN.